The primary structure comprises 480 residues: Protein nucleotidyltransferase YdiU (480 aa).

Positions 86, 88, 89, 109, 121, 122, 172, and 179 each coordinate ATP. Aspartate 248 functions as the Proton acceptor in the catalytic mechanism. Mg(2+)-binding residues include asparagine 249 and aspartate 258. Aspartate 258 serves as a coordination point for ATP.

Belongs to the SELO family. Mg(2+) serves as cofactor. It depends on Mn(2+) as a cofactor.

The catalysed reaction is L-seryl-[protein] + ATP = 3-O-(5'-adenylyl)-L-seryl-[protein] + diphosphate. The enzyme catalyses L-threonyl-[protein] + ATP = 3-O-(5'-adenylyl)-L-threonyl-[protein] + diphosphate. It carries out the reaction L-tyrosyl-[protein] + ATP = O-(5'-adenylyl)-L-tyrosyl-[protein] + diphosphate. It catalyses the reaction L-histidyl-[protein] + UTP = N(tele)-(5'-uridylyl)-L-histidyl-[protein] + diphosphate. The catalysed reaction is L-seryl-[protein] + UTP = O-(5'-uridylyl)-L-seryl-[protein] + diphosphate. The enzyme catalyses L-tyrosyl-[protein] + UTP = O-(5'-uridylyl)-L-tyrosyl-[protein] + diphosphate. Its function is as follows. Nucleotidyltransferase involved in the post-translational modification of proteins. It can catalyze the addition of adenosine monophosphate (AMP) or uridine monophosphate (UMP) to a protein, resulting in modifications known as AMPylation and UMPylation. The protein is Protein nucleotidyltransferase YdiU of Salmonella arizonae (strain ATCC BAA-731 / CDC346-86 / RSK2980).